The primary structure comprises 102 residues: Small ribosomal subunit protein uS10 (102 aa).

It belongs to the universal ribosomal protein uS10 family. In terms of assembly, part of the 30S ribosomal subunit.

Functionally, involved in the binding of tRNA to the ribosomes. The polypeptide is Small ribosomal subunit protein uS10 (Pyrococcus horikoshii (strain ATCC 700860 / DSM 12428 / JCM 9974 / NBRC 100139 / OT-3)).